Reading from the N-terminus, the 339-residue chain is Heat-inducible transcription repressor HrcA (339 aa).

Belongs to the HrcA family.

Negative regulator of class I heat shock genes (grpE-dnaK-dnaJ and groELS operons). Prevents heat-shock induction of these operons. In Thermotoga neapolitana (strain ATCC 49049 / DSM 4359 / NBRC 107923 / NS-E), this protein is Heat-inducible transcription repressor HrcA.